Here is an 894-residue protein sequence, read N- to C-terminus: Protein SEY1 homolog (894 aa).

Low complexity-rich tracts occupy residues 1-10 (MSEEITTNQT) and 36-48 (VQEQ…QEQQ). The tract at residues 1–97 (MSEEITTNQT…QKQQTQEQEH (97 aa)) is disordered. Residues 1 to 800 (MSEEITTNQT…EQNRLTSGGG (800 aa)) are Cytoplasmic-facing. Positions 21-60 (RLSNENIKQEDEEQQVQEQQEQQQQEQQEQIDDQDTQQQE) form a coiled coil. Acidic residues predominate over residues 49-65 (EQIDDQDTQQQEDEFVV). Over residues 78–93 (TPTLQETPQQQKQQTQ) the composition is skewed to low complexity. Positions 138 to 361 (GFDYSVISIL…ADSFIPKRKY (224 aa)) constitute a GB1/RHD3-type G domain. A GTP-binding site is contributed by 148-155 (GPQSSGKS). The helical transmembrane segment at 801 to 821 (VPGYMIILLCVLGFNEFISII) threads the bilayer. Residues 822–824 (SSP) are Lumenal-facing. Residues 825–845 (LLLLLTILLGGVGFVLFKLGL) traverse the membrane as a helical segment. Over 846-894 (AGPFIDYSSQILVHFISKVKDIVLHVEQLQEQNHNNNNNNNNTPKQKRE) the chain is Cytoplasmic.

The protein belongs to the TRAFAC class dynamin-like GTPase superfamily. GB1/RHD3 GTPase family. RHD3 subfamily.

It is found in the endoplasmic reticulum membrane. Its function is as follows. Probable GTP-binding protein that may be involved in cell development. The protein is Protein SEY1 homolog of Dictyostelium discoideum (Social amoeba).